The sequence spans 457 residues: ATP synthase subunit beta (457 aa).

ATP is bound at residue 147–154 (GGAGVGKT).

Belongs to the ATPase alpha/beta chains family. As to quaternary structure, F-type ATPases have 2 components, CF(1) - the catalytic core - and CF(0) - the membrane proton channel. CF(1) has five subunits: alpha(3), beta(3), gamma(1), delta(1), epsilon(1). CF(0) has three main subunits: a(1), b(2) and c(9-12). The alpha and beta chains form an alternating ring which encloses part of the gamma chain. CF(1) is attached to CF(0) by a central stalk formed by the gamma and epsilon chains, while a peripheral stalk is formed by the delta and b chains.

The protein resides in the cell inner membrane. It catalyses the reaction ATP + H2O + 4 H(+)(in) = ADP + phosphate + 5 H(+)(out). Functionally, produces ATP from ADP in the presence of a proton gradient across the membrane. The catalytic sites are hosted primarily by the beta subunits. The protein is ATP synthase subunit beta of Haemophilus influenzae (strain PittGG).